Here is a 202-residue protein sequence, read N- to C-terminus: Methylthioribulose-1-phosphate dehydratase (202 aa).

Zn(2+) contacts are provided by His93 and His95.

The protein belongs to the aldolase class II family. MtnB subfamily. Zn(2+) is required as a cofactor.

The enzyme catalyses 5-(methylsulfanyl)-D-ribulose 1-phosphate = 5-methylsulfanyl-2,3-dioxopentyl phosphate + H2O. It participates in amino-acid biosynthesis; L-methionine biosynthesis via salvage pathway; L-methionine from S-methyl-5-thio-alpha-D-ribose 1-phosphate: step 2/6. In terms of biological role, catalyzes the dehydration of methylthioribulose-1-phosphate (MTRu-1-P) into 2,3-diketo-5-methylthiopentyl-1-phosphate (DK-MTP-1-P). In Klebsiella pneumoniae (strain 342), this protein is Methylthioribulose-1-phosphate dehydratase.